The sequence spans 253 residues: MWPFGKSTADRVKDAFKANPVLAPLGLEVQESRGTVKVTGEVARQSQIGLINAVAGGINGVKNIDVSGVTVLQQASAPAAQTAPTTPAQTSPSVQDSPSTPVQMPDIVQQGAGDVEIEDTSRIAKAVLSAIRGNGELANNPIDVLQSGNSVILRGAVDSDHELRLAEQLARGVQGVSGVDISGLRVAQGAKELAKDKDEDTGDTVYTVKPGDSLSKIAEHYYGDQMEYKKIAHYNNISNPDLIQPGQKLRIPG.

The 70-residue stretch at phenylalanine 4 to glutamine 73 folds into the BON 1 domain. The span at alanine 79–serine 93 shows a compositional bias: low complexity. The interval alanine 79–proline 105 is disordered. Residues aspartate 119–glutamine 188 enclose the BON 2 domain. The 48-residue stretch at threonine 204 to isoleucine 251 folds into the LysM domain.

This is an uncharacterized protein from Deinococcus radiodurans (strain ATCC 13939 / DSM 20539 / JCM 16871 / CCUG 27074 / LMG 4051 / NBRC 15346 / NCIMB 9279 / VKM B-1422 / R1).